The sequence spans 101 residues: Antiviral protein CAP (101 aa).

Has antiviral activity against tobacco mosaic virus and antitumor activity. The sequence is that of Antiviral protein CAP from Coprinus comatus (Shaggy mane).